A 137-amino-acid chain; its full sequence is Large ribosomal subunit protein uL16 (137 aa).

The protein belongs to the universal ribosomal protein uL16 family. Part of the 50S ribosomal subunit.

Its function is as follows. Binds 23S rRNA and is also seen to make contacts with the A and possibly P site tRNAs. This Rhizobium rhizogenes (strain K84 / ATCC BAA-868) (Agrobacterium radiobacter) protein is Large ribosomal subunit protein uL16.